The primary structure comprises 197 residues: Thymidylate kinase (197 aa).

Residue 7 to 14 (GIDGSGKS) coordinates ATP.

The protein belongs to the thymidylate kinase family.

It carries out the reaction dTMP + ATP = dTDP + ADP. Phosphorylation of dTMP to form dTDP in both de novo and salvage pathways of dTTP synthesis. The protein is Thymidylate kinase of Thermotoga petrophila (strain ATCC BAA-488 / DSM 13995 / JCM 10881 / RKU-1).